The chain runs to 43 residues: Protein PsbN (43 aa).

A helical transmembrane segment spans residues 4–24 (AIVLSISMAAVVVAITGISIY).

This sequence belongs to the PsbN family.

Its subcellular location is the cellular thylakoid membrane. Its function is as follows. May play a role in photosystem I and II biogenesis. This is Protein PsbN from Nostoc punctiforme (strain ATCC 29133 / PCC 73102).